The primary structure comprises 633 residues: Probable extracellular metalloproteinase 5 (633 aa).

The N-terminal stretch at 1–20 (MHGLLLAAAGLLSLPLHVLA) is a signal peptide. Positions 21–244 (HPQPSTNLAG…VHNVVDYVSH (224 aa)) are excised as a propeptide. Asn285 carries N-linked (GlcNAc...) asparagine glycosylation. Residue His428 participates in Zn(2+) binding. Glu429 is a catalytic residue. His432 serves as a coordination point for Zn(2+). Asn592 and Asn621 each carry an N-linked (GlcNAc...) asparagine glycan.

The protein belongs to the peptidase M36 family. Requires Zn(2+) as cofactor.

The protein localises to the secreted. Its function is as follows. Secreted metalloproteinase probably acting as a virulence factor. This chain is Probable extracellular metalloproteinase 5 (MEP5), found in Arthroderma benhamiae (strain ATCC MYA-4681 / CBS 112371) (Trichophyton mentagrophytes).